A 360-amino-acid chain; its full sequence is Archaemetzincin-2 (360 aa).

Residue H254 participates in Zn(2+) binding. The active-site Proton acceptor is E255. Residues H258, H264, C265, C270, C289, and C292 each coordinate Zn(2+).

This sequence belongs to the peptidase M54 family. Zn(2+) is required as a cofactor.

In terms of biological role, probable zinc metalloprotease. This chain is Archaemetzincin-2 (AMZ2), found in Macaca fascicularis (Crab-eating macaque).